The chain runs to 98 residues: Large ribosomal subunit protein uL23 (98 aa).

Belongs to the universal ribosomal protein uL23 family. As to quaternary structure, part of the 50S ribosomal subunit. Contacts protein L29, and trigger factor when it is bound to the ribosome.

Functionally, one of the early assembly proteins it binds 23S rRNA. One of the proteins that surrounds the polypeptide exit tunnel on the outside of the ribosome. Forms the main docking site for trigger factor binding to the ribosome. The sequence is that of Large ribosomal subunit protein uL23 from Rickettsia peacockii (strain Rustic).